We begin with the raw amino-acid sequence, 516 residues long: Protein indeterminate-domain 4, chloroplastic (516 aa).

Residues 1-26 (MSSSSYNTSVIPSSSSSAQPFFITSS) are compositionally biased toward low complexity. Residues 1–68 (MSSSSYNTSV…QPGNPNPDAE (68 aa)) are disordered. Residues 1–70 (MSSSSYNTSV…GNPNPDAEVV (70 aa)) constitute a chloroplast transit peptide. Phosphoserine is present on S73. C2H2-type zinc fingers lie at residues 83-105 (FICD…RRGH) and 124-154 (YLCP…YRKH). The short motif at 146 to 153 (IKKHYYRK) is the Nuclear localization signal element. A C2H2-type 2; degenerate zinc finger spans residues 159–182 (WKCEKCSKRYAVQSDWKAHSKTCG). 8 residues coordinate Zn(2+): C161, C164, H177, C181, C188, C190, H203, and C207. The segment at 186–209 (YRCDCGTIFSRRDSYITHRAFCDA) adopts a CCHC-type 2; atypical zinc-finger fold. The SHR-binding stretch occupies residues 196-208 (RRDSYITHRAFCD). The interval 483-516 (NRGGGGGGRGSARGGVSLDGEAKFPEQNYPFGRG) is disordered. Residues 484–495 (RGGGGGGRGSAR) are compositionally biased toward gly residues.

Binds to RGA and SCL3 competitively in the nucleus.

The protein resides in the plastid. It is found in the chloroplast. Its subcellular location is the nucleus. Transcription factor that may act a transcriptional activator of nuclear-encoded photosynthetic gene expression. Binds DNA via its zinc fingers. Recognizes and binds to SCL3 promoter sequence 5'-AGACAA-3' to promote its expression when in complex with RGA. This is Protein indeterminate-domain 4, chloroplastic from Arabidopsis thaliana (Mouse-ear cress).